The primary structure comprises 247 residues: MSGHSKWATIKHAKGAADAKRGQLFTKFIKEISIAAKMGGGDPATNPRLRTAVLKARAANMPKDNIERAIKKGTGELGAVNYEELLYEGYGPGGVAVLVEVLTDNKNRTAASVRNIFTKSGGNLGATGSVAYMFNRKGVIEYDAEVVSEEAIMEAALEAGAEDIATEDGVITVTTDPNDFASVLEALQEKGFESVSAAVSMVPDTYVALDADTTQKALKMIDKLEEDDDVQTVSSNIEIPEGFEMPE.

This sequence belongs to the TACO1 family.

Its subcellular location is the cytoplasm. The chain is Probable transcriptional regulatory protein TDE_1487 from Treponema denticola (strain ATCC 35405 / DSM 14222 / CIP 103919 / JCM 8153 / KCTC 15104).